The primary structure comprises 705 residues: Glycogen [starch] synthase isoform 2 (705 aa).

Residue Arg-20 coordinates UDP. Position 159 is a phosphoserine (Ser-159). Residues His-193 and Arg-199 each coordinate UDP-alpha-D-glucose. Residues His-280, Glu-281, Gln-283, His-286, and Lys-290 each contribute to the alpha-D-glucose 6-phosphate site. Arg-320 lines the UDP pocket. Residue Arg-320 coordinates UDP-alpha-D-glucose. Ser-363 and Ser-467 each carry phosphoserine. His-500 lines the alpha-D-glucose 6-phosphate pocket. The UDP-alpha-D-glucose site is built by Glu-509, Trp-511, and Gly-512. Thr-514 contributes to the UDP binding site. Residues Arg-583 and Arg-587 each contribute to the alpha-D-glucose 6-phosphate site. Phosphoserine is present on Ser-651. Phosphoserine; by PHO85 is present on Ser-655. Phosphoserine; by PKA is present on residues Ser-661 and Ser-663. Thr-668 carries the post-translational modification Phosphothreonine; by PHO85. The segment at 686 to 705 (SLGVNPAADDDDDGPYADDS) is disordered. Positions 693–705 (ADDDDDGPYADDS) are enriched in acidic residues.

This sequence belongs to the glycosyltransferase 3 family. Interacts with PCL10. Phosphorylated by the cyclin-CDK PCL10-PHO85. Phosphorylation causes inactivation of enzyme.

It localises to the cytoplasm. The protein localises to the cytosol. It carries out the reaction [(1-&gt;4)-alpha-D-glucosyl](n) + UDP-alpha-D-glucose = [(1-&gt;4)-alpha-D-glucosyl](n+1) + UDP + H(+). Its pathway is glycan biosynthesis; glycogen biosynthesis. Allosteric activation by glucose-6-phosphate, and phosphorylation by a cAMP-dependent kinase. Its function is as follows. Glycogen synthase participates in the glycogen biosynthetic process along with glycogenin and glycogen branching enzyme. Extends the primer composed of a few glucose units formed by glycogenin by adding new glucose units to it. In this context, glycogen synthase transfers the glycosyl residue from UDP-Glc to the non-reducing end of alpha-1,4-glucan. In Saccharomyces cerevisiae (strain ATCC 204508 / S288c) (Baker's yeast), this protein is Glycogen [starch] synthase isoform 2 (GSY2).